Consider the following 2313-residue polypeptide: Histone-lysine N-methyltransferase Set2 (2313 aa).

Disordered regions lie at residues Met1–Ser115, Ala179–Phe442, Glu550–Lys858, Arg883–Leu1106, Glu1118–Asp1150, and Lys1163–Arg1251. A DNA-binding region (a.T hook 1) is located at residues Gly17–Ser29. Basic and acidic residues predominate over residues Ile73–Asn82. Residues Ser101–Ser115 show a composition bias toward low complexity. Positions Pro197–Ala209 form a DNA-binding region, a.T hook 2. Positions Ser221–Ser241 are enriched in low complexity. Residues Pro252–Leu265 show a composition bias toward basic residues. Residues Gly266–Pro288 show a composition bias toward low complexity. The span at Glu330 to Glu345 shows a compositional bias: basic and acidic residues. Acidic residues-rich tracts occupy residues Glu347–Met356, Pro365–Met375, and Ala388–Ala398. Position 404 is a phosphothreonine (Thr404). Residues Ala412–Arg433 show a composition bias toward low complexity. Basic and acidic residues predominate over residues Pro552–Glu563. Positions Glu659 to Asp671 are enriched in acidic residues. Positions Cys676–Thr685 are enriched in polar residues. 4 stretches are compositionally biased toward basic and acidic residues: residues Glu689 to Met708, Val719 to Val732, Val740 to Lys749, and Lys758 to Ala782. 2 positions are modified to phosphoserine: Ser786 and Ser788. Composition is skewed to polar residues over residues Ala800–Pro833, Lys918–Arg928, and Leu938–Ala955. Basic residues predominate over residues Lys959 to Pro969. Positions Ser997–Arg1010 are enriched in low complexity. Positions Thr1016–Pro1039 are enriched in basic and acidic residues. Composition is skewed to low complexity over residues Ser1085–Ser1097 and Glu1118–Ser1127. Residues Lys1163–Ala1183 show a composition bias toward basic and acidic residues. The segment covering Thr1199 to Pro1213 has biased composition (low complexity). The region spanning Asn1307–Gln1360 is the AWS domain. Residues Cys1312, Cys1314, Cys1328, Cys1332, Cys1341, Cys1345, and Cys1351 each contribute to the Zn(2+) site. Residues Trp1362–Gln1479 enclose the SET domain. S-adenosyl-L-methionine is bound by residues His1415–Tyr1417 and Asn1440–His1441. Cys1443 serves as a coordination point for Zn(2+). Residues Asp1486–Gly1502 form the Post-SET domain. Gln1488 provides a ligand contact to S-adenosyl-L-methionine. Cys1490 contributes to the Zn(2+) binding site. Position 1491 (Tyr1491) interacts with S-adenosyl-L-methionine. Residues Cys1492 and Cys1497 each coordinate Zn(2+). Disordered stretches follow at residues Ile1501 to Val1598 and Met1763 to Leu1860. Residues Pro1505–Glu1534 show a composition bias toward acidic residues. The span at Lys1539 to Ala1551 shows a compositional bias: basic residues. 3 stretches are compositionally biased toward basic and acidic residues: residues Gln1564–Ala1574, Met1763–Gln1774, and Glu1784–Thr1806. The span at Ser1817–Ser1832 shows a compositional bias: polar residues. Positions Thr1840–Leu1860 are enriched in basic and acidic residues. The WW domain occupies Asp1963–Pro1996. Phosphoserine occurs at positions 2130 and 2131. Residues Leu2177 to Arg2218 form a disordered region. Positions Val2193 to Lys2206 are enriched in basic residues. The span at Ser2207 to Ser2216 shows a compositional bias: polar residues.

This sequence belongs to the class V-like SAM-binding methyltransferase superfamily. Histone-lysine methyltransferase family. SET2 subfamily. Interacts with (phosphorylated) Polr2A.

Its subcellular location is the nucleus. The protein localises to the chromosome. The catalysed reaction is L-lysyl(36)-[histone H3] + 3 S-adenosyl-L-methionine = N(6),N(6),N(6)-trimethyl-L-lysyl(36)-[histone H3] + 3 S-adenosyl-L-homocysteine + 3 H(+). In terms of biological role, histone methyltransferase that specifically trimethylates 'Lys-36' of histone H3 (H3K36me3). Represents the main enzyme generating H3K36me3, a specific tag for epigenetic transcriptional activation. Involved in dosage compensation in males (X chromosome dosage compensation) by mediating formation of H3K36me3, a mark recognized by msl-3 component of the MSL complex. In addition to its role in dosage compensation in males, promotes germline stem cell differentiation in females: catalyzes formation of H3K36me3, promoting recruitment of msl-3 and subsequent recruitment of the ATAC complex, leading to transcription of genes, such as RpS19b. This chain is Histone-lysine N-methyltransferase Set2, found in Drosophila melanogaster (Fruit fly).